The primary structure comprises 110 residues: Large ribosomal subunit protein uL22 (110 aa).

This sequence belongs to the universal ribosomal protein uL22 family. As to quaternary structure, part of the 50S ribosomal subunit.

In terms of biological role, this protein binds specifically to 23S rRNA; its binding is stimulated by other ribosomal proteins, e.g. L4, L17, and L20. It is important during the early stages of 50S assembly. It makes multiple contacts with different domains of the 23S rRNA in the assembled 50S subunit and ribosome. The globular domain of the protein is located near the polypeptide exit tunnel on the outside of the subunit, while an extended beta-hairpin is found that lines the wall of the exit tunnel in the center of the 70S ribosome. The chain is Large ribosomal subunit protein uL22 from Janthinobacterium sp. (strain Marseille) (Minibacterium massiliensis).